Reading from the N-terminus, the 42-residue chain is uncharacterized protein (42 aa).

The helical transmembrane segment at 15–35 threads the bilayer; the sequence is INVCLSFFFLFYFIFVLFFAA.

The protein resides in the membrane. This is an uncharacterized protein from Dictyostelium discoideum (Social amoeba).